The chain runs to 273 residues: Ribosomal RNA small subunit methyltransferase A (273 aa).

S-adenosyl-L-methionine is bound by residues N18, L20, G45, E66, D91, and N113.

This sequence belongs to the class I-like SAM-binding methyltransferase superfamily. rRNA adenine N(6)-methyltransferase family. RsmA subfamily.

It localises to the cytoplasm. The catalysed reaction is adenosine(1518)/adenosine(1519) in 16S rRNA + 4 S-adenosyl-L-methionine = N(6)-dimethyladenosine(1518)/N(6)-dimethyladenosine(1519) in 16S rRNA + 4 S-adenosyl-L-homocysteine + 4 H(+). Its function is as follows. Specifically dimethylates two adjacent adenosines (A1518 and A1519) in the loop of a conserved hairpin near the 3'-end of 16S rRNA in the 30S particle. May play a critical role in biogenesis of 30S subunits. In Salmonella schwarzengrund (strain CVM19633), this protein is Ribosomal RNA small subunit methyltransferase A.